The sequence spans 604 residues: Serine/threonine-protein kinase A-Raf (604 aa).

One can recognise an RBD domain in the interval 19–91 (GTVKVYLPNK…DGEELIVEVL (73 aa)). Residues 98 to 144 (MHNFVRKTFFSLAFCDFCLKFLFHGFRCQTCGYKFHQHCSSKVPTVC) form a Phorbol-ester/DAG-type zinc finger. H99, C112, C115, C125, C128, H133, C136, and C144 together coordinate Zn(2+). 2 positions are modified to phosphoserine: S157 and S162. Disordered regions lie at residues 178–222 (ELLT…HMVS) and 241–287 (TDAA…DEKK). Residue T181 is modified to Phosphothreonine. At S186 the chain carries Phosphoserine. Positions 210–222 (IRSTSTPNVHMVS) are enriched in polar residues. Over residues 252–265 (PRGSPSPASVSSGR) the composition is skewed to low complexity. Phosphoserine occurs at positions 255 and 267. The segment covering 272–287 (LPAEQRERKSLADEKK) has biased composition (basic and acidic residues). The region spanning 308–568 (VQLLKRIGTG…PQILATIELL (261 aa)) is the Protein kinase domain. ATP contacts are provided by residues 314–322 (IGTGSFGTV) and K334. At T316 the chain carries Phosphothreonine. The active-site Proton acceptor is D427.

It belongs to the protein kinase superfamily. TKL Ser/Thr protein kinase family. RAF subfamily. As to quaternary structure, interacts with TH1L/NELFD. Zn(2+) serves as cofactor. Post-translationally, dephosphorylation by the SHOC2-MRAS-PP1c (SMP) complex consisting of SHOC2, GTP-bound M-Ras/MRAS and the catalytic subunit of protein phosphatase 1 (PPP1CA, PPP1CB or PPP1CC); this relieves inactivation and stimulates kinase activity.

The catalysed reaction is L-seryl-[protein] + ATP = O-phospho-L-seryl-[protein] + ADP + H(+). It catalyses the reaction L-threonyl-[protein] + ATP = O-phospho-L-threonyl-[protein] + ADP + H(+). Its function is as follows. Involved in the transduction of mitogenic signals from the cell membrane to the nucleus. May also regulate the TOR signaling cascade. Phosphorylates PFKFB2. The polypeptide is Serine/threonine-protein kinase A-Raf (Araf) (Rattus norvegicus (Rat)).